Reading from the N-terminus, the 232-residue chain is (S)-2-haloacid dehalogenase (232 aa).

Asp10 serves as the catalytic Nucleophile. Residues 11–12, Arg41, and 118–119 contribute to the an (S)-2-haloacid site; these read LY and SN. The segment at 175–180 is important for catalytic activity; that stretch reads SSNAWD.

It belongs to the HAD-like hydrolase superfamily. S-2-haloalkanoic acid dehalogenase family. As to quaternary structure, homodimer.

The enzyme catalyses an (S)-2-haloacid + H2O = a (2R)-2-hydroxycarboxylate + a halide anion + H(+). The catalysed reaction is (S)-2-chloropropanoate + H2O = (R)-lactate + chloride + H(+). Its function is as follows. Catalyzes the hydrolytic dehalogenation of small (S)-2-haloalkanoic acids to yield the corresponding (R)-2-hydroxyalkanoic acids. Acts on acids of short chain lengths, C(2) to C(4), with inversion of configuration at C-2. Active with 2-halogenated carboxylic acids and converts only the S-isomer (or L-isomer) of 2-chloropropionic acid with inversion of configuration to produce R-lactate (or D-isomer). The polypeptide is (S)-2-haloacid dehalogenase (Pseudomonas sp. (strain YL)).